Consider the following 289-residue polypeptide: UPF0276 protein BPP1075 (289 aa).

This sequence belongs to the UPF0276 family.

In Bordetella parapertussis (strain 12822 / ATCC BAA-587 / NCTC 13253), this protein is UPF0276 protein BPP1075.